The chain runs to 481 residues: uncharacterized protein (481 aa).

Transmembrane regions (helical) follow at residues leucine 32–valine 52, phenylalanine 82–tyrosine 102, methionine 137–phenylalanine 157, valine 173–isoleucine 193, valine 204–isoleucine 224, tryptophan 258–threonine 278, valine 289–glutamate 309, leucine 348–valine 368, leucine 392–leucine 412, and threonine 418–isoleucine 438.

This sequence belongs to the BCCT transporter (TC 2.A.15) family.

Its subcellular location is the cell inner membrane. Functionally, probable transporter whose substrate is unknown. Is not involved in aerobic D-malate transport. This is an uncharacterized protein from Escherichia coli (strain K12).